A 1085-amino-acid chain; its full sequence is Error-prone DNA polymerase 2 (1085 aa).

The segment at 1040–1066 (AGRGDEFAHGGGGPDSRDRQKPVVPRD) is disordered.

The protein belongs to the DNA polymerase type-C family. DnaE2 subfamily.

The protein localises to the cytoplasm. The enzyme catalyses DNA(n) + a 2'-deoxyribonucleoside 5'-triphosphate = DNA(n+1) + diphosphate. In terms of biological role, DNA polymerase involved in damage-induced mutagenesis and translesion synthesis (TLS). It is not the major replicative DNA polymerase. This is Error-prone DNA polymerase 2 from Agrobacterium fabrum (strain C58 / ATCC 33970) (Agrobacterium tumefaciens (strain C58)).